Here is a 558-residue protein sequence, read N- to C-terminus: 2-isopropylmalate synthase (558 aa).

A Pyruvate carboxyltransferase domain is found at 31 to 306 (PIWCAVDLRD…DPGIDFSNID (276 aa)). Residues Asp-40, His-245, His-247, and Asn-281 each coordinate Mg(2+). Positions 440-558 (AGSPYSFLEH…LCAANHLSDK (119 aa)) are regulatory domain.

Belongs to the alpha-IPM synthase/homocitrate synthase family. LeuA type 2 subfamily. As to quaternary structure, homodimer. It depends on Mg(2+) as a cofactor.

It is found in the cytoplasm. The enzyme catalyses 3-methyl-2-oxobutanoate + acetyl-CoA + H2O = (2S)-2-isopropylmalate + CoA + H(+). It functions in the pathway amino-acid biosynthesis; L-leucine biosynthesis; L-leucine from 3-methyl-2-oxobutanoate: step 1/4. Catalyzes the condensation of the acetyl group of acetyl-CoA with 3-methyl-2-oxobutanoate (2-ketoisovalerate) to form 3-carboxy-3-hydroxy-4-methylpentanoate (2-isopropylmalate). This is 2-isopropylmalate synthase from Rhodospirillum rubrum (strain ATCC 11170 / ATH 1.1.1 / DSM 467 / LMG 4362 / NCIMB 8255 / S1).